The following is a 96-amino-acid chain: Co-chaperonin GroES (96 aa).

The protein belongs to the GroES chaperonin family. As to quaternary structure, heptamer of 7 subunits arranged in a ring. Interacts with the chaperonin GroEL.

Its subcellular location is the cytoplasm. Its function is as follows. Together with the chaperonin GroEL, plays an essential role in assisting protein folding. The GroEL-GroES system forms a nano-cage that allows encapsulation of the non-native substrate proteins and provides a physical environment optimized to promote and accelerate protein folding. GroES binds to the apical surface of the GroEL ring, thereby capping the opening of the GroEL channel. The sequence is that of Co-chaperonin GroES from Idiomarina loihiensis (strain ATCC BAA-735 / DSM 15497 / L2-TR).